Here is a 251-residue protein sequence, read N- to C-terminus: MYVLVLSLGDPVSRTFLELHPMPLVETRGDIEVRKYGEIPAVVYKGEPTEFYREDILASLGKYAIFISRHEMSNPRPLFTVHTPGSWPDVSVANPRLASALFRALCKHAYEPFECAFEATHHAPNTSLVSATFIEVGSTEAEWRDKRAVGVLAQALEEALTKEFEGPTPTMAIGDLHYVTISDSVLRGEFDLGHVVPKYINITTNIVENILKKHTISIKKTIIFRKNIKNPIRTEIIELLRAKGIEVTLKG.

It belongs to the DtdA deacylase family. Monomer. It depends on Zn(2+) as a cofactor.

It catalyses the reaction a D-aminoacyl-tRNA + H2O = a tRNA + a D-alpha-amino acid + H(+). It carries out the reaction glycyl-tRNA(Ala) + H2O = tRNA(Ala) + glycine + H(+). Its function is as follows. D-aminoacyl-tRNA deacylase with broad substrate specificity. By recycling D-aminoacyl-tRNA to D-amino acids and free tRNA molecules, this enzyme counteracts the toxicity associated with the formation of D-aminoacyl-tRNA entities in vivo. In Pyrobaculum aerophilum (strain ATCC 51768 / DSM 7523 / JCM 9630 / CIP 104966 / NBRC 100827 / IM2), this protein is D-aminoacyl-tRNA deacylase.